The sequence spans 747 residues: Histone-lysine N-methyltransferase EZH1 (747 aa).

The tract at residues 186–229 (YSDEDEEGHNDTSDGKQDDSKEDLPVTRKRKRHAIEGSKKSSKK) is disordered. The span at 194–211 (HNDTSDGKQDDSKEDLPV) shows a compositional bias: basic and acidic residues. A Glycyl lysine isopeptide (Lys-Gly) (interchain with G-Cter in SUMO2) cross-link involves residue lysine 327. Positions 375-421 (TSASAVAETKEGDSDRDTGNDWASSSSEANSRCQTPTKQKASPAPPQ) are disordered. Over residues 382-393 (ETKEGDSDRDTG) the composition is skewed to basic and acidic residues. The segment covering 395–414 (DWASSSSEANSRCQTPTKQK) has biased composition (polar residues). Residues 504 to 606 (CRKIQLKKDN…CKVVSCKNCS (103 aa)) enclose the CXC domain. An SET domain is found at 613–728 (KHLLLAPSDV…AGEELFFDYR (116 aa)).

This sequence belongs to the class V-like SAM-binding methyltransferase superfamily. Histone-lysine methyltransferase family. EZ subfamily. As to quaternary structure, component of the PRC2/EED-EZH1 complex, which includes EED, EZH1, SUZ12, RBBP4 and AEBP2. The PRC2/EED-EZH1 is less abundant than the PRC2/EED-EZH2 complex, has weak methyltransferase activity and compacts chromatin in the absence of the methyltransferase cofactor S-adenosyl-L-methionine (SAM). Interacts with EZHIP; the interaction blocks EZH1 methyltransferase activity.

It localises to the nucleus. It carries out the reaction L-lysyl(27)-[histone H3] + 3 S-adenosyl-L-methionine = N(6),N(6),N(6)-trimethyl-L-lysyl(27)-[histone H3] + 3 S-adenosyl-L-homocysteine + 3 H(+). Functionally, polycomb group (PcG) protein. Catalytic subunit of the PRC2/EED-EZH1 complex, which methylates 'Lys-27' of histone H3, leading to transcriptional repression of the affected target gene. Able to mono-, di- and trimethylate 'Lys-27' of histone H3 to form H3K27me1, H3K27me2 and H3K27me3, respectively. Required for embryonic stem cell derivation and self-renewal, suggesting that it is involved in safeguarding embryonic stem cell identity. Compared to EZH2-containing complexes, it is less abundant in embryonic stem cells, has weak methyltransferase activity and plays a less critical role in forming H3K27me3, which is required for embryonic stem cell identity and proper differentiation. The chain is Histone-lysine N-methyltransferase EZH1 (EZH1) from Bos taurus (Bovine).